Consider the following 126-residue polypeptide: Large ribosomal subunit protein bL12 (126 aa).

It belongs to the bacterial ribosomal protein bL12 family. Homodimer. Part of the ribosomal stalk of the 50S ribosomal subunit. Forms a multimeric L10(L12)X complex, where L10 forms an elongated spine to which 2 to 4 L12 dimers bind in a sequential fashion. Binds GTP-bound translation factors.

Its function is as follows. Forms part of the ribosomal stalk which helps the ribosome interact with GTP-bound translation factors. Is thus essential for accurate translation. This chain is Large ribosomal subunit protein bL12, found in Bordetella avium (strain 197N).